The chain runs to 340 residues: MKILFWGTPAYAVPTLDTLHEAGHQIVGVVTQPDRRRGRGKQLMPSPVKARAQELGCPVFTPERIRRDLDCQQQLNALDADVSVVVAFGQILPKDILQHPPLGCWNGHGSLLPRWRGAGPIQWSILEGDPETGVGIMAMEEGLDTGPVLLEQRLSINLLENAHQLGERLSRLSADLMLQAMPVIEAAGPGLEAERWSRLQVRHQPEEGTYARMLSKEDFQLNWGDSALTIHRKVMGLYPGAVTVWKDRRLKVLATEPLIERLADDLSDEARALVGRWNTGAHPPGQVLHSADSGLVVSTHGCPILIREAQLEGKARSHGQALIQQLQAQPGDSLGLAAKP.

110–113 (SLLP) contributes to the (6S)-5,6,7,8-tetrahydrofolate binding site.

It belongs to the Fmt family.

It carries out the reaction L-methionyl-tRNA(fMet) + (6R)-10-formyltetrahydrofolate = N-formyl-L-methionyl-tRNA(fMet) + (6S)-5,6,7,8-tetrahydrofolate + H(+). Its function is as follows. Attaches a formyl group to the free amino group of methionyl-tRNA(fMet). The formyl group appears to play a dual role in the initiator identity of N-formylmethionyl-tRNA by promoting its recognition by IF2 and preventing the misappropriation of this tRNA by the elongation apparatus. The sequence is that of Methionyl-tRNA formyltransferase from Synechococcus sp. (strain WH7803).